Here is a 71-residue protein sequence, read N- to C-terminus: Probable ribosome maturation protein RlbA (71 aa).

In terms of domain architecture, S4 RNA-binding spans 12 to 69 (ITLGQFLKLADVIQSGGMAKWFLSEHEVLVNDEPDNRRGRKLYVGDVVEIEGFGSFQV).

Its function is as follows. May assist in the assembly of the 50S subunit. The polypeptide is Probable ribosome maturation protein RlbA (Bacillus subtilis (strain 168)).